A 321-amino-acid polypeptide reads, in one-letter code: Glycerol-3-phosphate phosphatase (321 aa).

The Nucleophile role is filled by D34. Residues D34, D36, and D260 each coordinate Mg(2+). D36 (proton donor) is an active-site residue.

This sequence belongs to the HAD-like hydrolase superfamily. CbbY/CbbZ/Gph/YieH family. Homodimer. Mg(2+) serves as cofactor. Ubiquitously expressed with higher expression in testis, heart, skeletal muscle and islet tissue (at protein level).

It catalyses the reaction O-phospho-L-tyrosyl-[protein] + H2O = L-tyrosyl-[protein] + phosphate. The catalysed reaction is sn-glycerol 1-phosphate + H2O = glycerol + phosphate. It carries out the reaction sn-glycerol 3-phosphate + H2O = glycerol + phosphate. Its activity is regulated as follows. Inhibited by orthovanadate, beryllium trifluoride, Ca(2+) and EDTA. In terms of biological role, glycerol-3-phosphate phosphatase hydrolyzing glycerol-3-phosphate into glycerol. Thereby, regulates the cellular levels of glycerol-3-phosphate a metabolic intermediate of glucose, lipid and energy metabolism. Was also shown to have a 2-phosphoglycolate phosphatase activity and a tyrosine-protein phosphatase activity. However, their physiological relevance is unclear. In vitro, also has a phosphatase activity toward ADP, ATP, GDP and GTP. The polypeptide is Glycerol-3-phosphate phosphatase (Mus musculus (Mouse)).